Consider the following 483-residue polypeptide: UDP-N-acetylmuramoyl-L-alanyl-D-glutamate--2,6-diaminopimelate ligase (483 aa).

Ser-30 provides a ligand contact to UDP-N-acetyl-alpha-D-muramoyl-L-alanyl-D-glutamate. Residue 109-115 (GTNGKTT) coordinates ATP. UDP-N-acetyl-alpha-D-muramoyl-L-alanyl-D-glutamate is bound by residues 151-152 (TT), Ser-178, and Arg-186. Lys-218 bears the N6-carboxylysine mark. Residues Arg-380, 403-406 (DNPR), Gly-453, and Glu-457 each bind meso-2,6-diaminopimelate. Positions 403–406 (DNPR) match the Meso-diaminopimelate recognition motif motif.

It belongs to the MurCDEF family. MurE subfamily. Mg(2+) serves as cofactor. In terms of processing, carboxylation is probably crucial for Mg(2+) binding and, consequently, for the gamma-phosphate positioning of ATP.

The protein localises to the cytoplasm. It catalyses the reaction UDP-N-acetyl-alpha-D-muramoyl-L-alanyl-D-glutamate + meso-2,6-diaminopimelate + ATP = UDP-N-acetyl-alpha-D-muramoyl-L-alanyl-gamma-D-glutamyl-meso-2,6-diaminopimelate + ADP + phosphate + H(+). It participates in cell wall biogenesis; peptidoglycan biosynthesis. Catalyzes the addition of meso-diaminopimelic acid to the nucleotide precursor UDP-N-acetylmuramoyl-L-alanyl-D-glutamate (UMAG) in the biosynthesis of bacterial cell-wall peptidoglycan. This is UDP-N-acetylmuramoyl-L-alanyl-D-glutamate--2,6-diaminopimelate ligase from Chlamydia trachomatis serovar A (strain ATCC VR-571B / DSM 19440 / HAR-13).